Here is a 338-residue protein sequence, read N- to C-terminus: Tagatose 1,6-diphosphate aldolase (338 aa).

The protein belongs to the aldolase LacD family.

The catalysed reaction is D-tagatofuranose 1,6-bisphosphate = D-glyceraldehyde 3-phosphate + dihydroxyacetone phosphate. The protein operates within carbohydrate metabolism; D-tagatose 6-phosphate degradation; D-glyceraldehyde 3-phosphate and glycerone phosphate from D-tagatose 6-phosphate: step 2/2. In Listeria monocytogenes serovar 1/2a (strain ATCC BAA-679 / EGD-e), this protein is Tagatose 1,6-diphosphate aldolase.